The primary structure comprises 953 residues: 26S proteasome non-ATPase regulatory subunit 1 (953 aa).

At Met1 the chain carries N-acetylmethionine. Thr273 carries the post-translational modification Phosphothreonine. Residues 277-319 are disordered; it reads SVPGSTNTGTVPGSEKDSDPMETEEKTASAVAGKTPDASPEPK. The residue at position 290 (Ser290) is a Phosphoserine. Residues 290 to 303 show a composition bias toward basic and acidic residues; that stretch reads SEKDSDPMETEEKT. The residue at position 310 (Lys310) is an N6-acetyllysine. Thr311 is subject to Phosphothreonine. Ser315 carries the phosphoserine modification. PC repeat units follow at residues 403–436, 441–474, 476–510, 511–545, 547–580, 581–616, 617–649, 651–685, 686–726, and 729–761; these read TATA…PGSA, GGLY…DIVR, GGSL…VTGE, AAGL…EKIL, GLAV…ILRR, SGMY…DVRR, AAVE…PHVR, GAAM…YVRQ, GALI…DVMA, and GAIL…PSVV. Lys720 carries the N6-acetyllysine modification. Thr830 carries the post-translational modification Phosphothreonine. A Phosphoserine modification is found at Ser834. Disordered stretches follow at residues 839 to 881 and 930 to 953; these read AKKK…LDNP and AHGP…YIDD. Composition is skewed to basic and acidic residues over residues 842–852 and 859–872; these read KEKEKEKKEEE and AEKK…KEPE. The segment covering 936 to 953 has biased composition (acidic residues); the sequence is EEEEQEPEPPEPFEYIDD.

This sequence belongs to the proteasome subunit S1 family. As to quaternary structure, component of the 19S proteasome regulatory particle complex. The 26S proteasome consists of a 20S core particle (CP) and two 19S regulatory subunits (RP). The regulatory particle is made of a lid composed of 9 subunits, a base containing 6 ATPases and few additional components including PSMD1. Interacts with ADRM1. Interacts with ZFAND1.

Functionally, component of the 26S proteasome, a multiprotein complex involved in the ATP-dependent degradation of ubiquitinated proteins. This complex plays a key role in the maintenance of protein homeostasis by removing misfolded or damaged proteins, which could impair cellular functions, and by removing proteins whose functions are no longer required. Therefore, the proteasome participates in numerous cellular processes, including cell cycle progression, apoptosis, or DNA damage repair. In Mus musculus (Mouse), this protein is 26S proteasome non-ATPase regulatory subunit 1 (Psmd1).